Reading from the N-terminus, the 68-residue chain is Movement protein TGBp3 (68 aa).

Residues 1–6 (MFSGKE) lie on the Lumenal side of the membrane. A helical transmembrane segment spans residues 7–26 (ITLFALSTLIALIVLNYMSA). At 27 to 68 (TPNPVCLIELTGHSAVLRGNNCESLTSGVIEALSAHLHGLRN) the chain is on the cytoplasmic side.

This sequence belongs to the Tymovirales TGBp3 protein family.

The protein localises to the host endoplasmic reticulum membrane. Its function is as follows. Plays a role in viral cell-to-cell propagation, by facilitating genome transport to neighboring plant cells through plasmosdesmata. May induce the formation of granular vesicles derived from the Endoplasmic reticulum, which align on actin filaments. This Papaya mosaic potexvirus (PMV) protein is Movement protein TGBp3.